The primary structure comprises 333 residues: UDP-3-O-acylglucosamine N-acyltransferase 2 (333 aa).

H243 acts as the Proton acceptor in catalysis.

Belongs to the transferase hexapeptide repeat family. LpxD subfamily. As to quaternary structure, homotrimer.

It carries out the reaction a UDP-3-O-[(3R)-3-hydroxyacyl]-alpha-D-glucosamine + a (3R)-hydroxyacyl-[ACP] = a UDP-2-N,3-O-bis[(3R)-3-hydroxyacyl]-alpha-D-glucosamine + holo-[ACP] + H(+). It participates in bacterial outer membrane biogenesis; LPS lipid A biosynthesis. In terms of biological role, catalyzes the N-acylation of UDP-3-O-acylglucosamine using 3-hydroxyacyl-ACP as the acyl donor. Is involved in the biosynthesis of lipid A, a phosphorylated glycolipid that anchors the lipopolysaccharide to the outer membrane of the cell. This chain is UDP-3-O-acylglucosamine N-acyltransferase 2, found in Koribacter versatilis (strain Ellin345).